The chain runs to 215 residues: 5'-deoxynucleotidase YGK1 (215 aa).

Residues 58–164 (ISDHMYRMGL…VKDIDKYEML (107 aa)) enclose the HD domain. A divalent metal cation contacts are provided by His61, His89, Asp90, Glu93, Asp98, Ile99, and Asp159.

The protein belongs to the HDDC2 family. As to quaternary structure, homodimer. Requires Mn(2+) as cofactor. The cofactor is Co(2+). Mg(2+) is required as a cofactor.

It catalyses the reaction a 2'-deoxyribonucleoside 5'-phosphate + H2O = a 2'-deoxyribonucleoside + phosphate. Its function is as follows. Catalyzes the dephosphorylation of the nucleoside 5'-monophosphates deoxyadenosine monophosphate (dAMP), deoxycytidine monophosphate (dCMP), deoxyguanosine monophosphate (dGMP) and deoxythymidine monophosphate (dTMP). This is 5'-deoxynucleotidase YGK1 from Saccharomyces cerevisiae (strain ATCC 204508 / S288c) (Baker's yeast).